Here is a 99-residue protein sequence, read N- to C-terminus: Large ribosomal subunit protein bL27 (99 aa).

Positions 1–10 (MKLIFDIQLF) are excised as a propeptide.

The protein belongs to the bacterial ribosomal protein bL27 family. In terms of processing, the N-terminus is cleaved by ribosomal processing cysteine protease Prp.

The sequence is that of Large ribosomal subunit protein bL27 from Caldicellulosiruptor bescii (strain ATCC BAA-1888 / DSM 6725 / KCTC 15123 / Z-1320) (Anaerocellum thermophilum).